We begin with the raw amino-acid sequence, 407 residues long: Imidazolonepropionase (407 aa).

Fe(3+) is bound by residues His-73 and His-75. Residues His-73 and His-75 each coordinate Zn(2+). Positions 82, 145, and 178 each coordinate 4-imidazolone-5-propanoate. Position 145 (Tyr-145) interacts with N-formimidoyl-L-glutamate. Residue His-243 participates in Fe(3+) binding. A Zn(2+)-binding site is contributed by His-243. Residue Gln-246 participates in 4-imidazolone-5-propanoate binding. Asp-318 contributes to the Fe(3+) binding site. Asp-318 contributes to the Zn(2+) binding site. Asn-320 and Gly-322 together coordinate N-formimidoyl-L-glutamate. Thr-323 serves as a coordination point for 4-imidazolone-5-propanoate.

Belongs to the metallo-dependent hydrolases superfamily. HutI family. The cofactor is Zn(2+). It depends on Fe(3+) as a cofactor.

It localises to the cytoplasm. It carries out the reaction 4-imidazolone-5-propanoate + H2O = N-formimidoyl-L-glutamate. It participates in amino-acid degradation; L-histidine degradation into L-glutamate; N-formimidoyl-L-glutamate from L-histidine: step 3/3. Functionally, catalyzes the hydrolytic cleavage of the carbon-nitrogen bond in imidazolone-5-propanoate to yield N-formimidoyl-L-glutamate. It is the third step in the universal histidine degradation pathway. The chain is Imidazolonepropionase from Serratia proteamaculans (strain 568).